Reading from the N-terminus, the 122-residue chain is Large ribosomal subunit protein uL14 (122 aa).

The protein belongs to the universal ribosomal protein uL14 family. In terms of assembly, part of the 50S ribosomal subunit. Forms a cluster with proteins L3 and L19. In the 70S ribosome, L14 and L19 interact and together make contacts with the 16S rRNA in bridges B5 and B8.

Its function is as follows. Binds to 23S rRNA. Forms part of two intersubunit bridges in the 70S ribosome. In Bacillus subtilis (strain 168), this protein is Large ribosomal subunit protein uL14.